Here is a 126-residue protein sequence, read N- to C-terminus: Holo-[acyl-carrier-protein] synthase (126 aa).

Aspartate 9 and glutamate 58 together coordinate Mg(2+).

This sequence belongs to the P-Pant transferase superfamily. AcpS family. It depends on Mg(2+) as a cofactor.

It is found in the cytoplasm. It catalyses the reaction apo-[ACP] + CoA = holo-[ACP] + adenosine 3',5'-bisphosphate + H(+). Transfers the 4'-phosphopantetheine moiety from coenzyme A to a Ser of acyl-carrier-protein. This Vibrio parahaemolyticus serotype O3:K6 (strain RIMD 2210633) protein is Holo-[acyl-carrier-protein] synthase.